A 536-amino-acid polypeptide reads, in one-letter code: MAVASKKIPAPDEVRIKTALLSVSDKSGIVELARHLNDRGVRLVSTGGTHKALADAGLPVSDVSELTGFPEIMDGRVKTLHPGVHGGLLAIRDDAEHAGAMSAHGITAIDLAVINLYPFEEVRAKGGDYPTTVENIDIGGPAMIRASAKNHAYVTVVTDPADYPLLLEEIAGGTTRYAFRQKMAAKAYARTAAYDAAISNWFAEVLDTPMPRHRVIGGVLKEEMRYGENPHQKAGFYVTGDKRPGVATAALLQGKQLSYNNINDTDAAFELVAEFLPEKAPACAIIKHANPCGVATAPSLAEAYRRALACDSTSAFGGIIALNQELDAATAEEIVKLFTEVIIAPSVSDEAKAIIARKPNLRLLATGGLPDPRTPGLTAKTVAGGLLVQTRDDGMIEDIELKVVTKRTPTAQELEDMKFAFKVAKHVKSNAVVYAKGGQTAGIGAGQMSRVDSARIAAIKAEEAAKALGLAEPLTRGSAVASEAFLPFADGLLSAIAAGATAVIQPGGSMRDEEVIAAADEHNVAMVFTGMRHFRH.

The region spanning 8-158 is the MGS-like domain; sequence IPAPDEVRIK…KNHAYVTVVT (151 aa).

The protein belongs to the PurH family.

The enzyme catalyses (6R)-10-formyltetrahydrofolate + 5-amino-1-(5-phospho-beta-D-ribosyl)imidazole-4-carboxamide = 5-formamido-1-(5-phospho-D-ribosyl)imidazole-4-carboxamide + (6S)-5,6,7,8-tetrahydrofolate. The catalysed reaction is IMP + H2O = 5-formamido-1-(5-phospho-D-ribosyl)imidazole-4-carboxamide. It participates in purine metabolism; IMP biosynthesis via de novo pathway; 5-formamido-1-(5-phospho-D-ribosyl)imidazole-4-carboxamide from 5-amino-1-(5-phospho-D-ribosyl)imidazole-4-carboxamide (10-formyl THF route): step 1/1. It functions in the pathway purine metabolism; IMP biosynthesis via de novo pathway; IMP from 5-formamido-1-(5-phospho-D-ribosyl)imidazole-4-carboxamide: step 1/1. The polypeptide is Bifunctional purine biosynthesis protein PurH (Sinorhizobium medicae (strain WSM419) (Ensifer medicae)).